The sequence spans 424 residues: UDP-N-acetylglucosamine 1-carboxyvinyltransferase (424 aa).

A phosphoenolpyruvate-binding site is contributed by 22-23 (KN). UDP-N-acetyl-alpha-D-glucosamine is bound at residue R93. C117 (proton donor) is an active-site residue. C117 carries the post-translational modification 2-(S-cysteinyl)pyruvic acid O-phosphothioketal. UDP-N-acetyl-alpha-D-glucosamine contacts are provided by residues 162-165 (KVSV), D307, and I329.

It belongs to the EPSP synthase family. MurA subfamily.

The protein resides in the cytoplasm. It carries out the reaction phosphoenolpyruvate + UDP-N-acetyl-alpha-D-glucosamine = UDP-N-acetyl-3-O-(1-carboxyvinyl)-alpha-D-glucosamine + phosphate. Its pathway is cell wall biogenesis; peptidoglycan biosynthesis. Its function is as follows. Cell wall formation. Adds enolpyruvyl to UDP-N-acetylglucosamine. In Glaesserella parasuis serovar 5 (strain SH0165) (Haemophilus parasuis), this protein is UDP-N-acetylglucosamine 1-carboxyvinyltransferase.